Here is a 275-residue protein sequence, read N- to C-terminus: Polyamine aminopropyltransferase (275 aa).

In terms of domain architecture, PABS spans 2–235 (HLWFTEKQND…AMWSFTIGSK (234 aa)). Q31 is a binding site for S-methyl-5'-thioadenosine. H62 and D86 together coordinate spermidine. Residues E106 and 137 to 138 (DG) each bind S-methyl-5'-thioadenosine. D155 (proton acceptor) is an active-site residue. 155-158 (DSTD) contacts spermidine. P162 contributes to the S-methyl-5'-thioadenosine binding site.

Belongs to the spermidine/spermine synthase family. In terms of assembly, homodimer or homotetramer.

It localises to the cytoplasm. It catalyses the reaction S-adenosyl 3-(methylsulfanyl)propylamine + putrescine = S-methyl-5'-thioadenosine + spermidine + H(+). Its pathway is amine and polyamine biosynthesis; spermidine biosynthesis; spermidine from putrescine: step 1/1. Catalyzes the irreversible transfer of a propylamine group from the amino donor S-adenosylmethioninamine (decarboxy-AdoMet) to putrescine (1,4-diaminobutane) to yield spermidine. The polypeptide is Polyamine aminopropyltransferase (Desulforudis audaxviator (strain MP104C)).